Here is a 342-residue protein sequence, read N- to C-terminus: MKGLVKKISAPGLWMENLPIPSHVKDDEVLIKTIKTSICGTDVHIYKWDAWAQKNVPVPLVIGHEFIGEIAEFGKNVKGFKIGERVCGEGHIVCNQCPNCRMGRKHVCMHTKGLGYHISGCFAEYFVLPAENVFSLPPSISDDLGAIFDPYGNAVHTTLAFNLIGEDVLITGAGPIGIMAAAIAKQAGARHIVITDVNDYRLDLARTMGVSHAINVNRESLDNFMQSLGIKYGFTVGLEMSGHPDGLKTLTEKIRHGGNIALLGILPPATSIDWNLVIFKMLTLKGIYGREIFSTWYQMVHLLEIGLNLAPIITHHFSVDNFEKGFEVMLSGQSGKVILDWV.

Zn(2+) is bound at residue cysteine 39. Catalysis depends on charge relay system residues threonine 41 and histidine 44. 6 residues coordinate Zn(2+): histidine 64, glutamate 65, cysteine 94, cysteine 97, cysteine 100, and cysteine 108. NAD(+) is bound by residues isoleucine 176, aspartate 196, arginine 201, 263-265 (LGI), and 287-288 (IY).

The protein belongs to the zinc-containing alcohol dehydrogenase family. Homotetramer. The cofactor is Zn(2+).

It is found in the cytoplasm. It carries out the reaction L-threonine + NAD(+) = (2S)-2-amino-3-oxobutanoate + NADH + H(+). It participates in amino-acid degradation; L-threonine degradation via oxydo-reductase pathway; glycine from L-threonine: step 1/2. Functionally, catalyzes the NAD(+)-dependent oxidation of L-threonine to 2-amino-3-ketobutyrate. This Protochlamydia amoebophila (strain UWE25) protein is L-threonine 3-dehydrogenase.